The following is a 101-amino-acid chain: Urease subunit gamma (101 aa).

Belongs to the urease gamma subunit family. As to quaternary structure, heterotrimer of UreA (gamma), UreB (beta) and UreC (alpha) subunits. Three heterotrimers associate to form the active enzyme.

The protein localises to the cytoplasm. The enzyme catalyses urea + 2 H2O + H(+) = hydrogencarbonate + 2 NH4(+). The protein operates within nitrogen metabolism; urea degradation; CO(2) and NH(3) from urea (urease route): step 1/1. In Ureaplasma urealyticum serovar 10 (strain ATCC 33699 / Western), this protein is Urease subunit gamma.